A 188-amino-acid polypeptide reads, in one-letter code: Probable nicotinate-nucleotide adenylyltransferase (188 aa).

It belongs to the NadD family.

It carries out the reaction nicotinate beta-D-ribonucleotide + ATP + H(+) = deamido-NAD(+) + diphosphate. Its pathway is cofactor biosynthesis; NAD(+) biosynthesis; deamido-NAD(+) from nicotinate D-ribonucleotide: step 1/1. Its function is as follows. Catalyzes the reversible adenylation of nicotinate mononucleotide (NaMN) to nicotinic acid adenine dinucleotide (NaAD). The chain is Probable nicotinate-nucleotide adenylyltransferase from Listeria monocytogenes serovar 1/2a (strain ATCC BAA-679 / EGD-e).